A 159-amino-acid polypeptide reads, in one-letter code: Ribonuclease H (159 aa).

Positions 1 to 145 (MTHIRAIYTD…CDLIARRLSR (145 aa)) constitute an RNase H type-1 domain. Residues D10, E49, D74, and D137 each contribute to the Mg(2+) site.

Belongs to the RNase H family. In terms of assembly, monomer. Requires Mg(2+) as cofactor.

Its subcellular location is the cytoplasm. The enzyme catalyses Endonucleolytic cleavage to 5'-phosphomonoester.. Functionally, endonuclease that specifically degrades the RNA of RNA-DNA hybrids. The polypeptide is Ribonuclease H (Thermosynechococcus vestitus (strain NIES-2133 / IAM M-273 / BP-1)).